We begin with the raw amino-acid sequence, 210 residues long: SAP domain-containing ribonucleoprotein (210 aa).

Ala-2 carries the post-translational modification N-acetylalanine. In terms of domain architecture, SAP spans 8-42 (LHKLKLAELKQECLARGLETKGIKQDLIHRLQAYL). At Lys-10 the chain carries N6-acetyllysine. Over residues 45 to 64 (HAEEEANEEDVLGDETEEEE) the composition is skewed to acidic residues. Positions 45 to 86 (HAEEEANEEDVLGDETEEEETKPIELPVKEEEPPEKTVDVAA) are disordered. Residues 65–86 (TKPIELPVKEEEPPEKTVDVAA) are compositionally biased toward basic and acidic residues. Residue Lys-142 is modified to N6-acetyllysine. The interval 161-210 (VSSISRKSEDDEKLKKRKERFGIVTSSAGTGTTEDTEAKKRKRAERFGIA) is disordered. Ser-163 is subject to Phosphoserine. Residues 184–193 (VTSSAGTGTT) are compositionally biased toward polar residues.

This sequence belongs to the SAP domain-containing ribonucleoprotein family. As to quaternary structure, interacts with DDX39A. Interacts with FUS. Interacts (via the C-terminal domain) with DDX39B; the interaction is direct and facilitates RNA binding of DDX39B. Component of the transcription/export (TREX) complex at least composed of ALYREF/THOC4, DDX39B, SARNP/CIP29, CHTOP and the THO subcomplex; TREX seems to have dynamic structure involving ATP-dependent remodeling; in the complex interacts directly with DDX39B in a ATP-dependent manner which bridges it to ALYREF/THOC4. In terms of tissue distribution, low expression in spleen, liver, pancreas, testis, thymus, heart, and kidney. Increased levels are seen in hepatocellular carcinoma and pancreatic adenocarcinoma.

Its subcellular location is the nucleus. The protein localises to the nucleus speckle. Binds both single-stranded and double-stranded DNA with higher affinity for the single-stranded form. Specifically binds to scaffold/matrix attachment region DNA. Also binds single-stranded RNA. Enhances RNA unwinding activity of DDX39A. May participate in important transcriptional or translational control of cell growth, metabolism and carcinogenesis. Component of the TREX complex which is thought to couple mRNA transcription, processing and nuclear export, and specifically associates with spliced mRNA and not with unspliced pre-mRNA. The TREX complex is recruited to spliced mRNAs by a transcription-independent mechanism, binds to mRNA upstream of the exon-junction complex (EJC) and is recruited in a splicing- and cap-dependent manner to a region near the 5' end of the mRNA where it functions in mRNA export to the cytoplasm via the TAP/NXF1 pathway. Associates with DDX39B, which facilitates RNA binding of DDX39B and likely plays a role in mRNA export. The chain is SAP domain-containing ribonucleoprotein (SARNP) from Homo sapiens (Human).